The sequence spans 304 residues: Aspartate carbamoyltransferase catalytic subunit (304 aa).

Carbamoyl phosphate-binding residues include Arg-49 and Thr-50. Lys-77 serves as a coordination point for L-aspartate. Carbamoyl phosphate contacts are provided by Arg-99, His-127, and Gln-130. 2 residues coordinate L-aspartate: Arg-160 and Arg-211. Carbamoyl phosphate is bound by residues Ala-252 and Pro-253.

It belongs to the aspartate/ornithine carbamoyltransferase superfamily. ATCase family. Heterododecamer (2C3:3R2) of six catalytic PyrB chains organized as two trimers (C3), and six regulatory PyrI chains organized as three dimers (R2).

It carries out the reaction carbamoyl phosphate + L-aspartate = N-carbamoyl-L-aspartate + phosphate + H(+). The protein operates within pyrimidine metabolism; UMP biosynthesis via de novo pathway; (S)-dihydroorotate from bicarbonate: step 2/3. Catalyzes the condensation of carbamoyl phosphate and aspartate to form carbamoyl aspartate and inorganic phosphate, the committed step in the de novo pyrimidine nucleotide biosynthesis pathway. The chain is Aspartate carbamoyltransferase catalytic subunit from Bacillus cytotoxicus (strain DSM 22905 / CIP 110041 / 391-98 / NVH 391-98).